The primary structure comprises 226 residues: MGIRAIVVDTAGTTTDLNFIEDVLFPYSAKALPAFLEENQNNVLVDNCICDVQDIALEPDASLARVTEILLQWIEEDRKATPLKTIQGLIWKQGYANGEFTGHIFPDFIEALDGYKQQGLRVYSFSSGSVEAQKLLFSHSDAGDLNDKFNGHFDTRTGNKRFKQAYSNIVNTISLSPKQILFVSDVLEELKAANEAGLHVVQMVRDDSQRTGDFKTIASFDELKID.

This sequence belongs to the HAD-like hydrolase superfamily. MasA/MtnC family. Monomer. It depends on Mg(2+) as a cofactor.

The catalysed reaction is 5-methylsulfanyl-2,3-dioxopentyl phosphate + H2O = 1,2-dihydroxy-5-(methylsulfanyl)pent-1-en-3-one + phosphate. It functions in the pathway amino-acid biosynthesis; L-methionine biosynthesis via salvage pathway; L-methionine from S-methyl-5-thio-alpha-D-ribose 1-phosphate: step 3/6. Its pathway is amino-acid biosynthesis; L-methionine biosynthesis via salvage pathway; L-methionine from S-methyl-5-thio-alpha-D-ribose 1-phosphate: step 4/6. Bifunctional enzyme that catalyzes the enolization of 2,3-diketo-5-methylthiopentyl-1-phosphate (DK-MTP-1-P) into the intermediate 2-hydroxy-3-keto-5-methylthiopentenyl-1-phosphate (HK-MTPenyl-1-P), which is then dephosphorylated to form the acireductone 1,2-dihydroxy-3-keto-5-methylthiopentene (DHK-MTPene). This chain is Enolase-phosphatase E1, found in Shewanella pealeana (strain ATCC 700345 / ANG-SQ1).